Here is a 148-residue protein sequence, read N- to C-terminus: SsrA-binding protein (148 aa).

This sequence belongs to the SmpB family.

The protein resides in the cytoplasm. Functionally, required for rescue of stalled ribosomes mediated by trans-translation. Binds to transfer-messenger RNA (tmRNA), required for stable association of tmRNA with ribosomes. tmRNA and SmpB together mimic tRNA shape, replacing the anticodon stem-loop with SmpB. tmRNA is encoded by the ssrA gene; the 2 termini fold to resemble tRNA(Ala) and it encodes a 'tag peptide', a short internal open reading frame. During trans-translation Ala-aminoacylated tmRNA acts like a tRNA, entering the A-site of stalled ribosomes, displacing the stalled mRNA. The ribosome then switches to translate the ORF on the tmRNA; the nascent peptide is terminated with the 'tag peptide' encoded by the tmRNA and targeted for degradation. The ribosome is freed to recommence translation, which seems to be the essential function of trans-translation. The chain is SsrA-binding protein from Mycoplasma mycoides subsp. mycoides SC (strain CCUG 32753 / NCTC 10114 / PG1).